The primary structure comprises 274 residues: Penicillin-insensitive murein endopeptidase (274 aa).

Residues 1–19 (MNKTAIALLALLASSASLA) form the signal peptide. Intrachain disulfides connect Cys44–Cys265, Cys187–Cys235, and Cys216–Cys223. Residues His110, His113, Asp120, Asp147, His150, and His211 each contribute to the Zn(2+) site. A disordered region spans residues 227–274 (PLPPPGDGCGAELQSWFEPPKPGTTKPEKKTPPPLPPSCQALLDEHVI).

This sequence belongs to the peptidase M74 family. Dimer. Zn(2+) is required as a cofactor.

It is found in the periplasm. In terms of biological role, murein endopeptidase that cleaves the D-alanyl-meso-2,6-diamino-pimelyl amide bond that connects peptidoglycan strands. Likely plays a role in the removal of murein from the sacculus. The chain is Penicillin-insensitive murein endopeptidase from Escherichia coli O9:H4 (strain HS).